The following is a 283-amino-acid chain: Gap junction beta-1 protein (283 aa).

Residues 1 to 22 (MNWTGLYTLLSGVNRHSTAIGR) are Cytoplasmic-facing. A helical transmembrane segment spans residues 23-45 (VWLSVIFIFRIMVLVVAAESVWG). The Extracellular segment spans residues 46–75 (DEKSSFICNTLQPGCNSVCYDQFFPISHVR). The helical transmembrane segment at 76–95 (LWSLQLILVSTPALLVAMHV) threads the bilayer. Residues 96-130 (AHQQHIEKKMLRLEGHGDPLHLEEVKRHKVHISGT) are Cytoplasmic-facing. The chain crosses the membrane as a helical span at residues 131 to 153 (LWWAYVISVVFRLLFEAVFMYVF). Over 154–191 (YLLYPGYAMVRLVKCDVYPCPNTVDCFVSRPTEKTVFT) the chain is Extracellular. The chain crosses the membrane as a helical span at residues 192–214 (VFMLAASGICIILNVAEVVYLII). The Cytoplasmic segment spans residues 215–283 (RACARRAQRR…AEKSDRCSAC (69 aa)). A phosphoserine mark is found at S233, S258, S266, and S277.

The protein belongs to the connexin family. Beta-type (group I) subfamily. As to quaternary structure, a connexon is composed of a hexamer of connexins. Interacts with CNST.

It localises to the cell membrane. The protein localises to the cell junction. It is found in the gap junction. Its function is as follows. One gap junction consists of a cluster of closely packed pairs of transmembrane channels, the connexons, through which materials of low MW diffuse from one cell to a neighboring cell. This Macaca fascicularis (Crab-eating macaque) protein is Gap junction beta-1 protein (GJB1).